Reading from the N-terminus, the 606-residue chain is Envelope glycoprotein gp95 (606 aa).

The N-terminal stretch at 1–62 is a signal peptide; the sequence is MEAVIKAFLT…VLCEVTGVRA (62 aa). The Extracellular segment spans residues 63–552; that stretch reads DVHLLEQPGN…EWAVHLLKGL (490 aa). 5 N-linked (GlcNAc...) asparagine; by host glycosylation sites follow: Asn79, Asn120, Asn141, Asn158, and Asn178. 7 disulfides stabilise this stretch: Cys87/Cys499, Cys121/Cys152, Cys192/Cys245, Cys258/Cys267, Cys353/Cys370, Cys410/Cys446, and Cys491/Cys498. Residues 185–226 form a binding to host receptor region; the sequence is ISGITGGCVGFRPQGVPWYLGWSRQEATRFLLRHPSFSKSTE. The N-linked (GlcNAc...) asparagine; by host glycan is linked to Asn257. The tract at residues 261-288 is binding to host receptor; it reads VGRQYRCGNARSPRPGLPEIQCTRRGGK. Asn291, Asn297, Asn307, and Asn315 each carry an N-linked (GlcNAc...) asparagine; by host glycan. N-linked (GlcNAc...) asparagine; by host glycosylation occurs at Asn391. A fusion peptide region spans residues 418 to 438; the sequence is GPTARIFASILAPGVARAQAL. The stretch at 435-485 forms a coiled coil; it reads AQALREIERLACWSVKQANLTTSFLGDLLDDVTSIRHAVLQNRAAIDFLLL. Asn453 is a glycosylation site (N-linked (GlcNAc...) asparagine; by host). The tract at residues 474-490 is immunosuppression; it reads LQNRAAIDFLLLAHGHG. Asn501 carries an N-linked (GlcNAc...) asparagine; by host glycan. Residues 503 to 533 adopt a coiled-coil conformation; sequence SDHSESIQKKFQLMKEHVNKIGVDSDPIGSW. Residues 553–573 form a helical membrane-spanning segment; sequence LLGLVVILLLVVCLPCLLQIV. Residues Cys565 and Cys568 are each lipidated (S-palmitoyl cysteine; by host). Residues 574 to 606 are Cytoplasmic-facing; the sequence is CGNIRKMINNSISYHTEYKKLQKACGQPESRIV.

It belongs to the Alpharetroviruses envelope glycoprotein family. As to quaternary structure, heterodimer with the transmembrane protein. The mature envelope protein (Env) consists of a trimer of SU-TM heterodimers attached by a labile interchain disulfide bond. Interacts with the host cell entry receptor TVA isoforms pg900 and pg800; this interaction allows the viral attachment. In terms of assembly, heterodimer with the surface protein. The mature envelope protein (Env) consists of a trimer of SU-TM heterodimers attached by a labile interchain disulfide bond. Specific enzymatic cleavages in vivo yield mature proteins. Envelope glycoproteins are synthesized as an inactive precursor that is N-glycosylated and processed likely by host cell furin or by a furin-like protease in the Golgi to yield the mature SU and TM proteins. The cleavage site between SU and TM requires the minimal sequence [KR]-X-[KR]-R. In terms of processing, the transmembrane protein is palmitoylated. Palmitoylation is necessary for glycoprotein function and infectivity.

It localises to the virion membrane. The protein localises to the host cell membrane. The surface protein (SU) attaches the virus to the host cell entry receptor TVA. This interaction triggers the refolding of the transmembrane protein (TM) thereby unmasking its fusion peptide and the formation of a reactive thiolate on Cys-100 to activate its fusogenic potential. Fusion occurs at the host cell plasma membrane. In terms of biological role, the transmembrane protein (TM) acts as a class I viral fusion protein. Under the current model, the protein has at least 3 conformational states: pre-fusion native state, pre-hairpin intermediate state, and post-fusion hairpin state. During viral and target cell membrane fusion, the coiled coil regions (heptad repeats) assume a trimer-of-hairpins structure, positioning the fusion peptide in close proximity to the C-terminal region of the ectodomain. The formation of this structure appears to drive apposition and subsequent fusion of viral and target cell membranes. Membranes fusion leads to delivery of the nucleocapsid into the cytoplasm. The sequence is that of Envelope glycoprotein gp95 (env) from Avian leukosis virus subgroup A (isolate RSA) (ALV-A RSA).